Consider the following 427-residue polypeptide: MAP kinase-interacting serine/threonine-protein kinase 1 (427 aa).

Basic and acidic residues predominate over residues 1-11 (MVSSQKLEKPI). The tract at residues 1-37 (MVSSQKLEKPIEMGSSEPLPIVDSDKRRKKKRKTRAT) is disordered. T34 bears the Phosphothreonine; by PAK2 mark. S39 carries the post-translational modification Phosphoserine; by PAK2. The Protein kinase domain occupies 49–333 (QLTSELLGEG…AAQVLQHPWV (285 aa)). ATP contacts are provided by residues 55–63 (LGEGAYAKV) and K78. Residue D170 is the Proton acceptor of the active site. S180 and S185 each carry phosphoserine. T209, T214, and T344 each carry phosphothreonine. A disordered region spans residues 407 to 427 (RALAQAGRSRDANPCLTPAGL).

The protein belongs to the protein kinase superfamily. CAMK Ser/Thr protein kinase family. In terms of assembly, interacts with the C-terminal regions of EIF4G1 and EIF4G2. Also binds to dephosphorylated ERK1 and ERK2, and to the p38 kinases. Mg(2+) is required as a cofactor. Post-translationally, dual phosphorylation of Thr-209 and Thr-214 activates the kinase. Phosphorylation of Thr-344 activates the kinase. MAPK3/ERK1 is one of the kinases which activate MKNK1/MNK1. Phosphorylation by PAK2 leads to a reduced phosphorylation of EIF4G1. In terms of tissue distribution, ubiquitously expressed in all tissues examined, with high levels in skeletal muscle.

The catalysed reaction is L-seryl-[protein] + ATP = O-phospho-L-seryl-[protein] + ADP + H(+). The enzyme catalyses L-threonyl-[protein] + ATP = O-phospho-L-threonyl-[protein] + ADP + H(+). Phosphorylated and activated by the p38 kinases and kinases in the Erk pathway. Functionally, may play a role in the response to environmental stress and cytokines. Appears to regulate translation by phosphorylating EIF4E, thus increasing the affinity of this protein for the 7-methylguanosine-containing mRNA cap. The chain is MAP kinase-interacting serine/threonine-protein kinase 1 (Mknk1) from Mus musculus (Mouse).